The primary structure comprises 413 residues: Probable tRNA pseudouridine synthase D (413 aa).

The Nucleophile role is filled by Asp97. The TRUD domain maps to 167–370 (AVPNYYGYQR…YGSYRRARLE (204 aa)).

Belongs to the pseudouridine synthase TruD family.

The enzyme catalyses uridine(13) in tRNA = pseudouridine(13) in tRNA. Could be responsible for synthesis of pseudouridine from uracil-13 in transfer RNAs. This is Probable tRNA pseudouridine synthase D from Pyrobaculum arsenaticum (strain DSM 13514 / JCM 11321 / PZ6).